Consider the following 375-residue polypeptide: Glutamate 5-kinase (375 aa).

Lys13 is a binding site for ATP. Substrate contacts are provided by Ser54, Asp141, and Asn153. ATP contacts are provided by residues Thr173–Asp174 and Thr216–Lys222. The PUA domain occupies Thr281–Val359.

This sequence belongs to the glutamate 5-kinase family.

It localises to the cytoplasm. It catalyses the reaction L-glutamate + ATP = L-glutamyl 5-phosphate + ADP. Its pathway is amino-acid biosynthesis; L-proline biosynthesis; L-glutamate 5-semialdehyde from L-glutamate: step 1/2. Functionally, catalyzes the transfer of a phosphate group to glutamate to form L-glutamate 5-phosphate. The chain is Glutamate 5-kinase from Synechocystis sp. (strain ATCC 27184 / PCC 6803 / Kazusa).